Reading from the N-terminus, the 294-residue chain is N-acetylmuramic acid 6-phosphate etherase (294 aa).

The SIS domain maps to 56-219 (TSYSLRNGGR…STLSMVSVGK (164 aa)). Catalysis depends on Glu-84, which acts as the Proton donor. The active site involves Glu-115.

This sequence belongs to the GCKR-like family. MurNAc-6-P etherase subfamily. As to quaternary structure, homodimer.

It catalyses the reaction N-acetyl-D-muramate 6-phosphate + H2O = N-acetyl-D-glucosamine 6-phosphate + (R)-lactate. Its pathway is amino-sugar metabolism; 1,6-anhydro-N-acetylmuramate degradation. It participates in amino-sugar metabolism; N-acetylmuramate degradation. The protein operates within cell wall biogenesis; peptidoglycan recycling. In terms of biological role, specifically catalyzes the cleavage of the D-lactyl ether substituent of MurNAc 6-phosphate, producing GlcNAc 6-phosphate and D-lactate. Together with AnmK, is also required for the utilization of anhydro-N-acetylmuramic acid (anhMurNAc) either imported from the medium or derived from its own cell wall murein, and thus plays a role in cell wall recycling. The sequence is that of N-acetylmuramic acid 6-phosphate etherase from Francisella tularensis subsp. holarctica (strain LVS).